We begin with the raw amino-acid sequence, 430 residues long: Trigger factor (430 aa).

Positions 163-248 (GDIAVIDFEG…LNSLKRKNMP (86 aa)) constitute a PPIase FKBP-type domain.

It belongs to the FKBP-type PPIase family. Tig subfamily.

It localises to the cytoplasm. It catalyses the reaction [protein]-peptidylproline (omega=180) = [protein]-peptidylproline (omega=0). Functionally, involved in protein export. Acts as a chaperone by maintaining the newly synthesized protein in an open conformation. Functions as a peptidyl-prolyl cis-trans isomerase. This chain is Trigger factor, found in Brevibacillus brevis (strain 47 / JCM 6285 / NBRC 100599).